A 415-amino-acid chain; its full sequence is NPL4-like protein (415 aa).

Residues 130 to 279 form the MPN domain; sequence AASFDRDSAN…FEAFQMSEIC (150 aa).

It belongs to the NPL4 family.

It is found in the endoplasmic reticulum. It functions in the pathway protein degradation; proteasomal ubiquitin-dependent pathway. May be part of a complex that binds ubiquitinated proteins and that is necessary for the export of misfolded proteins from the ER to the cytoplasm, where they are degraded by the proteasome. The protein is NPL4-like protein of Oryza sativa subsp. japonica (Rice).